We begin with the raw amino-acid sequence, 121 residues long: NAD(P)H-quinone oxidoreductase subunit M (121 aa).

Belongs to the complex I NdhM subunit family. As to quaternary structure, NDH-1 can be composed of about 15 different subunits; different subcomplexes with different compositions have been identified which probably have different functions.

The protein localises to the cellular thylakoid membrane. It carries out the reaction a plastoquinone + NADH + (n+1) H(+)(in) = a plastoquinol + NAD(+) + n H(+)(out). The catalysed reaction is a plastoquinone + NADPH + (n+1) H(+)(in) = a plastoquinol + NADP(+) + n H(+)(out). Functionally, NDH-1 shuttles electrons from an unknown electron donor, via FMN and iron-sulfur (Fe-S) centers, to quinones in the respiratory and/or the photosynthetic chain. The immediate electron acceptor for the enzyme in this species is believed to be plastoquinone. Couples the redox reaction to proton translocation, and thus conserves the redox energy in a proton gradient. Cyanobacterial NDH-1 also plays a role in inorganic carbon-concentration. The sequence is that of NAD(P)H-quinone oxidoreductase subunit M from Synechococcus sp. (strain JA-3-3Ab) (Cyanobacteria bacterium Yellowstone A-Prime).